The following is a 762-amino-acid chain: Endothelin-converting enzyme 1 (762 aa).

Over 1–60 the chain is Cytoplasmic; sequence MGSLRPPQGLGLQWSSFFLGKKGPGLTVSLPLLASSLQVNFRSPRSGQRCWAARTSVEKR. The helical; Signal-anchor for type II membrane protein transmembrane segment at 61-81 threads the bilayer; the sequence is LVVLVTLLAAGLVACLAALGI. The Extracellular portion of the chain corresponds to 82 to 762; it reads QYRTRTPPVC…MNPRHKCEVW (681 aa). The 673-residue stretch at 90–762 folds into the Peptidase M13 domain; that stretch reads VCLTEACVSV…MNPRHKCEVW (673 aa). Intrachain disulfides connect C91/C96, C114/C747, C122/C707, C177/C427, and C636/C759. 8 N-linked (GlcNAc...) asparagine glycosylation sites follow: N158, N179, N202, N262, N308, N354, N375, and N531. H599 contacts Zn(2+). E600 is an active-site residue. H603 provides a ligand contact to Zn(2+). N-linked (GlcNAc...) asparagine glycosylation is found at N624 and N643. Zn(2+) is bound at residue E659. Residue D663 is the Proton donor of the active site.

Belongs to the peptidase M13 family. Homodimer; disulfide-linked. Interacts with PPP1R16B. Interacts with TSPAN8; this interaction recruits the endothelin converting enzyme ECE1 to tetraspanin-enriched microdomains and positively modulates its enzymatic activity. Requires Zn(2+) as cofactor. In terms of tissue distribution, all isoforms are expressed in aortic endothelial cells. Isoform A is also expressed in liver; isoform B in smooth muscle cells and fibroblasts; isoform C in aortic endothelial cells, smooth muscle cells, fibroblasts, liver and lung, and isoform D in smooth muscle cells.

The protein localises to the cell membrane. The catalysed reaction is Hydrolysis of the 21-Trp-|-Val-22 bond in big endothelin to form endothelin 1.. Inhibited by phosphoramidon. Functionally, converts big endothelin-1 to endothelin-1. This Rattus norvegicus (Rat) protein is Endothelin-converting enzyme 1 (Ece1).